We begin with the raw amino-acid sequence, 358 residues long: ATPase ASNA1 homolog (358 aa).

35–42 (KGGVGKTT) lines the ATP pocket. Residue Asp64 is part of the active site. The ATP site is built by Glu235 and Asn262.

This sequence belongs to the arsA ATPase family. In terms of assembly, homodimer.

Its subcellular location is the cytoplasm. The protein localises to the endoplasmic reticulum. Functionally, ATPase required for the post-translational delivery of tail-anchored (TA) proteins to the endoplasmic reticulum. Recognizes and selectively binds the transmembrane domain of TA proteins in the cytosol. This complex then targets to the endoplasmic reticulum by membrane-bound receptors, where the tail-anchored protein is released for insertion. This process is regulated by ATP binding and hydrolysis. ATP binding drives the homodimer towards the closed dimer state, facilitating recognition of newly synthesized TA membrane proteins. ATP hydrolysis is required for insertion. Subsequently, the homodimer reverts towards the open dimer state, lowering its affinity for the membrane-bound receptor, and returning it to the cytosol to initiate a new round of targeting. The polypeptide is ATPase ASNA1 homolog (Babesia bovis).